Here is a 332-residue protein sequence, read N- to C-terminus: Tyrosine--tRNA ligase (332 aa).

Tyr32, Tyr156, Gln160, Asp163, and Gln178 together coordinate L-tyrosine. The 'KMSKS' region motif lies at 219–223; the sequence is KMSKS. Lys222 contributes to the ATP binding site.

Belongs to the class-I aminoacyl-tRNA synthetase family. TyrS type 4 subfamily. Homodimer.

The protein localises to the cytoplasm. The catalysed reaction is tRNA(Tyr) + L-tyrosine + ATP = L-tyrosyl-tRNA(Tyr) + AMP + diphosphate + H(+). Its function is as follows. Catalyzes the attachment of tyrosine to tRNA(Tyr) in a two-step reaction: tyrosine is first activated by ATP to form Tyr-AMP and then transferred to the acceptor end of tRNA(Tyr). This chain is Tyrosine--tRNA ligase, found in Thermoplasma acidophilum (strain ATCC 25905 / DSM 1728 / JCM 9062 / NBRC 15155 / AMRC-C165).